A 184-amino-acid polypeptide reads, in one-letter code: Ethylene-responsive transcription factor ERF010 (184 aa).

The AP2/ERF DNA-binding region spans 20–77; the sequence is PYKGIRMRKWGKWVAEIREPNKRSRLWLGSYSTPEAAARAYDTAVFYLRGPTARLNFP. The disordered stretch occupies residues 123 to 184; it reads QNRDSDVDNK…SSDEEWESKH (62 aa). Basic and acidic residues predominate over residues 161–172; the sequence is LLDRVDLNKLPD. A compositionally biased stretch (acidic residues) spans 174-184; sequence ESSDEEWESKH.

This sequence belongs to the AP2/ERF transcription factor family. ERF subfamily.

It is found in the nucleus. Its function is as follows. Probably acts as a transcriptional activator. Binds to the GCC-box pathogenesis-related promoter element. May be involved in the regulation of gene expression by stress factors and by components of stress signal transduction pathways. The sequence is that of Ethylene-responsive transcription factor ERF010 (ERF010) from Arabidopsis thaliana (Mouse-ear cress).